The following is a 345-amino-acid chain: N-acetyl-gamma-glutamyl-phosphate reductase (345 aa).

The active site involves Cys-149.

The protein belongs to the NAGSA dehydrogenase family. Type 1 subfamily.

Its subcellular location is the cytoplasm. It carries out the reaction N-acetyl-L-glutamate 5-semialdehyde + phosphate + NADP(+) = N-acetyl-L-glutamyl 5-phosphate + NADPH + H(+). Its pathway is amino-acid biosynthesis; L-arginine biosynthesis; N(2)-acetyl-L-ornithine from L-glutamate: step 3/4. In terms of biological role, catalyzes the NADPH-dependent reduction of N-acetyl-5-glutamyl phosphate to yield N-acetyl-L-glutamate 5-semialdehyde. In Geobacillus sp. (strain WCH70), this protein is N-acetyl-gamma-glutamyl-phosphate reductase.